A 163-amino-acid polypeptide reads, in one-letter code: Nucleotide-binding protein BBR47_25280 (163 aa).

This sequence belongs to the YajQ family.

In terms of biological role, nucleotide-binding protein. The sequence is that of Nucleotide-binding protein BBR47_25280 from Brevibacillus brevis (strain 47 / JCM 6285 / NBRC 100599).